A 172-amino-acid polypeptide reads, in one-letter code: Adenine phosphoribosyltransferase (172 aa).

The protein belongs to the purine/pyrimidine phosphoribosyltransferase family. As to quaternary structure, homodimer.

The protein resides in the cytoplasm. The enzyme catalyses AMP + diphosphate = 5-phospho-alpha-D-ribose 1-diphosphate + adenine. The protein operates within purine metabolism; AMP biosynthesis via salvage pathway; AMP from adenine: step 1/1. In terms of biological role, catalyzes a salvage reaction resulting in the formation of AMP, that is energically less costly than de novo synthesis. In Streptococcus equi subsp. zooepidemicus (strain H70), this protein is Adenine phosphoribosyltransferase.